An 83-amino-acid chain; its full sequence is Small ribosomal subunit protein bS16 (83 aa).

Belongs to the bacterial ribosomal protein bS16 family.

This Borrelia hermsii (strain HS1 / DAH) protein is Small ribosomal subunit protein bS16.